The primary structure comprises 290 residues: Ribosomal protein L11 methyltransferase (290 aa).

Residues Thr135, Gly158, Asp180, and Asn227 each contribute to the S-adenosyl-L-methionine site.

Belongs to the methyltransferase superfamily. PrmA family.

Its subcellular location is the cytoplasm. The enzyme catalyses L-lysyl-[protein] + 3 S-adenosyl-L-methionine = N(6),N(6),N(6)-trimethyl-L-lysyl-[protein] + 3 S-adenosyl-L-homocysteine + 3 H(+). Methylates ribosomal protein L11. The chain is Ribosomal protein L11 methyltransferase from Mesorhizobium japonicum (strain LMG 29417 / CECT 9101 / MAFF 303099) (Mesorhizobium loti (strain MAFF 303099)).